Consider the following 207-residue polypeptide: Small ribosomal subunit protein uS2 (207 aa).

It belongs to the universal ribosomal protein uS2 family.

This Pyrobaculum islandicum (strain DSM 4184 / JCM 9189 / GEO3) protein is Small ribosomal subunit protein uS2.